Consider the following 218-residue polypeptide: Pyridoxine/pyridoxamine 5'-phosphate oxidase (218 aa).

Substrate contacts are provided by residues 12–15 and Arg70; that span reads RMSY. Residues 65-70, 80-81, Lys87, and Gln109 each bind FMN; these read RTVLLR and YT. The substrate site is built by Tyr127, Arg131, and Ser135. Residues 145 to 146 and Trp191 each bind FMN; that span reads QS. 197 to 199 serves as a coordination point for substrate; sequence RLH. Position 201 (Arg201) interacts with FMN.

Belongs to the pyridoxamine 5'-phosphate oxidase family. In terms of assembly, homodimer. Requires FMN as cofactor.

It carries out the reaction pyridoxamine 5'-phosphate + O2 + H2O = pyridoxal 5'-phosphate + H2O2 + NH4(+). The enzyme catalyses pyridoxine 5'-phosphate + O2 = pyridoxal 5'-phosphate + H2O2. It functions in the pathway cofactor metabolism; pyridoxal 5'-phosphate salvage; pyridoxal 5'-phosphate from pyridoxamine 5'-phosphate: step 1/1. The protein operates within cofactor metabolism; pyridoxal 5'-phosphate salvage; pyridoxal 5'-phosphate from pyridoxine 5'-phosphate: step 1/1. In terms of biological role, catalyzes the oxidation of either pyridoxine 5'-phosphate (PNP) or pyridoxamine 5'-phosphate (PMP) into pyridoxal 5'-phosphate (PLP). This chain is Pyridoxine/pyridoxamine 5'-phosphate oxidase, found in Acinetobacter baylyi (strain ATCC 33305 / BD413 / ADP1).